The following is a 717-amino-acid chain: Catalase-peroxidase (717 aa).

The signal sequence occupies residues 1 to 12 (MTSKGMCPVAHG). The tryptophyl-tyrosyl-methioninium (Trp-Tyr) (with M-247) cross-link spans 93–221 (WHSAGSYRIA…LAAVMMGLIY (129 aa)). His94 (proton acceptor) is an active-site residue. Positions 221–247 (YVNPEGVDGKPDPLKTAQDMRVTFARM) form a cross-link, tryptophyl-tyrosyl-methioninium (Tyr-Met) (with W-93). His262 contributes to the heme b binding site.

It belongs to the peroxidase family. Peroxidase/catalase subfamily. As to quaternary structure, homodimer or homotetramer. Heme b serves as cofactor. Post-translationally, formation of the three residue Trp-Tyr-Met cross-link is important for the catalase, but not the peroxidase activity of the enzyme.

The catalysed reaction is H2O2 + AH2 = A + 2 H2O. The enzyme catalyses 2 H2O2 = O2 + 2 H2O. In terms of biological role, bifunctional enzyme with both catalase and broad-spectrum peroxidase activity. In Polynucleobacter asymbioticus (strain DSM 18221 / CIP 109841 / QLW-P1DMWA-1) (Polynucleobacter necessarius subsp. asymbioticus), this protein is Catalase-peroxidase.